The chain runs to 118 residues: Aspartate 1-decarboxylase (118 aa).

Ser25 acts as the Schiff-base intermediate with substrate; via pyruvic acid in catalysis. Ser25 is subject to Pyruvic acid (Ser). Thr57 serves as a coordination point for substrate. Residue Tyr58 is the Proton donor of the active site. 73-75 contacts substrate; that stretch reads GAA.

It belongs to the PanD family. Heterooctamer of four alpha and four beta subunits. The cofactor is pyruvate. Is synthesized initially as an inactive proenzyme, which is activated by self-cleavage at a specific serine bond to produce a beta-subunit with a hydroxyl group at its C-terminus and an alpha-subunit with a pyruvoyl group at its N-terminus.

Its subcellular location is the cytoplasm. It catalyses the reaction L-aspartate + H(+) = beta-alanine + CO2. It participates in cofactor biosynthesis; (R)-pantothenate biosynthesis; beta-alanine from L-aspartate: step 1/1. Its function is as follows. Catalyzes the pyruvoyl-dependent decarboxylation of aspartate to produce beta-alanine. This chain is Aspartate 1-decarboxylase, found in Phenylobacterium zucineum (strain HLK1).